Reading from the N-terminus, the 77-residue chain is DNA-directed RNA polymerase subunit Rpo5 (77 aa).

It belongs to the archaeal Rpo5/eukaryotic RPB5 RNA polymerase subunit family. Part of the RNA polymerase complex.

The protein resides in the cytoplasm. The catalysed reaction is RNA(n) + a ribonucleoside 5'-triphosphate = RNA(n+1) + diphosphate. Functionally, DNA-dependent RNA polymerase (RNAP) catalyzes the transcription of DNA into RNA using the four ribonucleoside triphosphates as substrates. The sequence is that of DNA-directed RNA polymerase subunit Rpo5 from Methanosphaera stadtmanae (strain ATCC 43021 / DSM 3091 / JCM 11832 / MCB-3).